The sequence spans 715 residues: ATP-dependent RecD2 DNA helicase (715 aa).

The segment at 1–150 (MSAALPAEPF…STLHKMVSSW (150 aa)) is not required for helicase activity. ATP contacts are provided by residues glutamine 343 and 363 to 367 (GTGKS). 2 DNA-binding regions span residues glycine 391 and 407 to 414 (TVHRLLGY). Glutamine 466 is a binding site for ATP. Valine 470 is a DNA-binding region. An ATP-binding site is contributed by arginine 493. DNA-binding regions lie at residues 554–555 (RK), 596–604 (NDYNNEIFN), and 644–647 (TVHR). Arginine 679 provides a ligand contact to ATP.

Belongs to the RecD family. RecD2 subfamily. As to quaternary structure, monomer; homodimers seem to be inactive.

The catalysed reaction is Couples ATP hydrolysis with the unwinding of duplex DNA at the replication fork by translocating in the 5'-3' direction. This creates two antiparallel DNA single strands (ssDNA). The leading ssDNA polymer is the template for DNA polymerase III holoenzyme which synthesizes a continuous strand.. It catalyses the reaction ATP + H2O = ADP + phosphate + H(+). Its function is as follows. DNA-dependent ATPase (ssDNA stimulates the ATPase better than dsDNA) and ATP-dependent 5'-3' DNA helicase. Plays a role in an antioxidant pathway. Involved in DNA damage repair and/or recombination. Appears to move along DNA in single base steps, powered by hydrolysis of 1 molecule of ATP. Has low processivity, unwinds about 15-20 base pairs/second. Short (20 bp) substrates with 5'-overhangs or forked ends are the best substrates, is much less efficient on 52 or 76 bp substrates with 5'-overhangs. The presence of single-stranded DNA-binding protein (SSB) increases unwinding 4-5 fold. Has no activity on blunt DNA or DNA with 3'-overhangs. Requires at least 10 bases of 5'-ssDNA for helicase activity. The sequence is that of ATP-dependent RecD2 DNA helicase from Deinococcus radiodurans (strain ATCC 13939 / DSM 20539 / JCM 16871 / CCUG 27074 / LMG 4051 / NBRC 15346 / NCIMB 9279 / VKM B-1422 / R1).